A 763-amino-acid polypeptide reads, in one-letter code: ATP-dependent RNA helicase MAK5 (763 aa).

Disordered stretches follow at residues 1-35 (MVNK…SNNN) and 87-169 (DTKI…DNEV). Over residues 18-35 (FKGSSSKGNSKTVKSNNN) the composition is skewed to low complexity. Acidic residues predominate over residues 104 to 114 (EIDEDAPENDL). A compositionally biased stretch (basic and acidic residues) spans 115-127 (VEFKNMDDMKDGE). Positions 136–160 (SEAEAESEAESEEEEEKTGDDEGED) are enriched in acidic residues. Residues 192–220 (WTEKVGELSFTTLHGLTKLGFNKPTLIQE) carry the Q motif motif. A Helicase ATP-binding domain is found at 223 to 411 (IPMALKGEDI…SHASWKNMKT (189 aa)). 236 to 243 (ASTGSGKT) is a binding site for ATP. Residues 352 to 355 (DEAD) carry the DEAD box motif. The 170-residue stretch at 450 to 619 (QIKESLIECA…DIIMGKKKWQ (170 aa)) folds into the Helicase C-terminal domain.

It belongs to the DEAD box helicase family. DDX24/MAK5 subfamily.

Its subcellular location is the nucleus. The protein resides in the nucleolus. The catalysed reaction is ATP + H2O = ADP + phosphate + H(+). Its function is as follows. ATP-binding RNA helicase involved in the biogenesis of 60S ribosomal subunits and is required for the normal formation of 25S and 5.8S rRNAs. In Vanderwaltozyma polyspora (strain ATCC 22028 / DSM 70294 / BCRC 21397 / CBS 2163 / NBRC 10782 / NRRL Y-8283 / UCD 57-17) (Kluyveromyces polysporus), this protein is ATP-dependent RNA helicase MAK5 (MAK5).